We begin with the raw amino-acid sequence, 567 residues long: DNA ligase (567 aa).

E246 serves as a coordination point for ATP. Catalysis depends on K248, which acts as the N6-AMP-lysine intermediate. Residues R253, R268, E298, F339, R415, and K421 each contribute to the ATP site.

This sequence belongs to the ATP-dependent DNA ligase family. Mg(2+) serves as cofactor.

The catalysed reaction is ATP + (deoxyribonucleotide)n-3'-hydroxyl + 5'-phospho-(deoxyribonucleotide)m = (deoxyribonucleotide)n+m + AMP + diphosphate.. In terms of biological role, DNA ligase that seals nicks in double-stranded DNA during DNA replication, DNA recombination and DNA repair. The chain is DNA ligase from Nanoarchaeum equitans (strain Kin4-M).